We begin with the raw amino-acid sequence, 1105 residues long: uncharacterized protein (1105 aa).

This sequence belongs to the mycobacterial PPE family.

This is an uncharacterized protein from Mycobacterium tuberculosis (strain CDC 1551 / Oshkosh).